Here is a 275-residue protein sequence, read N- to C-terminus: Trans-aconitate 2-methyltransferase (275 aa).

It belongs to the methyltransferase superfamily. Tam family.

It is found in the cytoplasm. The catalysed reaction is trans-aconitate + S-adenosyl-L-methionine = (E)-3-(methoxycarbonyl)pent-2-enedioate + S-adenosyl-L-homocysteine. Its function is as follows. Catalyzes the S-adenosylmethionine monomethyl esterification of trans-aconitate. The protein is Trans-aconitate 2-methyltransferase of Pseudomonas paraeruginosa (strain DSM 24068 / PA7) (Pseudomonas aeruginosa (strain PA7)).